A 289-amino-acid polypeptide reads, in one-letter code: Probable endonuclease 4 (289 aa).

9 residues coordinate Zn(2+): His-75, His-115, Glu-153, Asp-187, His-190, His-224, Asp-237, His-239, and Glu-269.

This sequence belongs to the AP endonuclease 2 family. Zn(2+) serves as cofactor.

It carries out the reaction Endonucleolytic cleavage to 5'-phosphooligonucleotide end-products.. Functionally, endonuclease IV plays a role in DNA repair. It cleaves phosphodiester bonds at apurinic or apyrimidinic (AP) sites, generating a 3'-hydroxyl group and a 5'-terminal sugar phosphate. The polypeptide is Probable endonuclease 4 (Chlamydia caviae (strain ATCC VR-813 / DSM 19441 / 03DC25 / GPIC) (Chlamydophila caviae)).